A 240-amino-acid polypeptide reads, in one-letter code: Triosephosphate isomerase (240 aa).

9–11 (NWK) contributes to the substrate binding site. The Electrophile role is filled by His-94. Glu-163 acts as the Proton acceptor in catalysis. Residues Gly-169, Ser-202, and 223 to 224 (GG) each bind substrate.

Belongs to the triosephosphate isomerase family. Homodimer.

The protein localises to the cytoplasm. The enzyme catalyses D-glyceraldehyde 3-phosphate = dihydroxyacetone phosphate. The protein operates within carbohydrate biosynthesis; gluconeogenesis. Its pathway is carbohydrate degradation; glycolysis; D-glyceraldehyde 3-phosphate from glycerone phosphate: step 1/1. In terms of biological role, involved in the gluconeogenesis. Catalyzes stereospecifically the conversion of dihydroxyacetone phosphate (DHAP) to D-glyceraldehyde-3-phosphate (G3P). In Gloeobacter violaceus (strain ATCC 29082 / PCC 7421), this protein is Triosephosphate isomerase.